The primary structure comprises 541 residues: Zinc finger protein 513 (541 aa).

The tract at residues 1-120 is disordered; it reads MPRRKQSHPQ…ARGERPGPAC (120 aa). Positions 44–55 are enriched in acidic residues; that stretch reads LEFEEEEEEEEG. Phosphoserine occurs at positions 85 and 96. The segment covering 103-115 has biased composition (basic and acidic residues); the sequence is EPARGPGEARGER. C2H2-type zinc fingers lie at residues 150–172, 178–200, 206–228, 360–382, 388–410, 416–438, 444–466, and 472–494; these read YSCR…MQTH, FRCG…TRTH, YRCP…QRTH, FACS…MKTH, FRCA…QRVH, YKCP…GRIH, FRCS…MLRH, and FRCA…QKVH. Positions 492 to 541 are disordered; sequence KVHGHGGAGGPGLSAPEGWAPPHSPPSVLSTRGSAALGATGSRALHTDSP.

The protein belongs to the krueppel C2H2-type zinc-finger protein family. As to quaternary structure, binds DNA. Can associate with the proximal promoter regions of PAX6 and SP4, and their known targets including ARR3, RHO, OPN1MW2 and OPN1SW.

The protein localises to the nucleus. Transcriptional regulator that plays a role in retinal development and maintenance. The sequence is that of Zinc finger protein 513 (Znf513) from Rattus norvegicus (Rat).